Reading from the N-terminus, the 414-residue chain is Bifunctional protein GlmU (414 aa).

The segment at 1–208 (MDAVILCAGS…SSKLYGIELN (208 aa)) is pyrophosphorylase. UTP contacts are provided by residues 6–9 (LCAG), glutamine 74, and glycine 79. The N-acetyl-alpha-D-glucosamine 1-phosphate site is built by threonine 80, glycine 130, asparagine 142, and asparagine 162. Residues 209–228 (GYWNDIGRPWDVLSANNYFL) are linker. Residues 229–414 (KNIMPKISGN…KDELIIKKRN (186 aa)) are N-acetyltransferase. The Proton acceptor role is filled by histidine 312. 2 residues coordinate acetyl-CoA: alanine 388 and lysine 405.

This sequence in the N-terminal section; belongs to the N-acetylglucosamine-1-phosphate uridyltransferase family. The protein in the C-terminal section; belongs to the transferase hexapeptide repeat family.

The enzyme catalyses N-acetyl-alpha-D-glucosamine 1-phosphate + UTP + H(+) = UDP-N-acetyl-alpha-D-glucosamine + diphosphate. It carries out the reaction alpha-D-glucosamine 1-phosphate + acetyl-CoA = N-acetyl-alpha-D-glucosamine 1-phosphate + CoA + H(+). The protein operates within nucleotide-sugar biosynthesis; UDP-N-acetyl-alpha-D-glucosamine biosynthesis; N-acetyl-alpha-D-glucosamine 1-phosphate from alpha-D-glucosamine 6-phosphate (route II): step 2/2. Its pathway is nucleotide-sugar biosynthesis; UDP-N-acetyl-alpha-D-glucosamine biosynthesis; UDP-N-acetyl-alpha-D-glucosamine from N-acetyl-alpha-D-glucosamine 1-phosphate: step 1/1. Its function is as follows. Catalyzes the last two sequential reactions in the de novo biosynthetic pathway for UDP-N-acetyl-glucosamine (UDP-GlcNAc). Responsible for the acetylation of GlcN-1-P to GlcNAc-1-P, and for the uridyl transfer from UTP to GlcNAc-1-P, to produce UDP-GlcNAc and pyrophosphate. This Methanococcus vannielii (strain ATCC 35089 / DSM 1224 / JCM 13029 / OCM 148 / SB) protein is Bifunctional protein GlmU.